The following is a 156-amino-acid chain: ATP synthase subunit b (156 aa).

A helical membrane pass occupies residues 7-27; sequence LIGQTIAFIVFVWFCMKFVWP.

The protein belongs to the ATPase B chain family. As to quaternary structure, F-type ATPases have 2 components, F(1) - the catalytic core - and F(0) - the membrane proton channel. F(1) has five subunits: alpha(3), beta(3), gamma(1), delta(1), epsilon(1). F(0) has three main subunits: a(1), b(2) and c(10-14). The alpha and beta chains form an alternating ring which encloses part of the gamma chain. F(1) is attached to F(0) by a central stalk formed by the gamma and epsilon chains, while a peripheral stalk is formed by the delta and b chains.

Its subcellular location is the cell inner membrane. In terms of biological role, f(1)F(0) ATP synthase produces ATP from ADP in the presence of a proton or sodium gradient. F-type ATPases consist of two structural domains, F(1) containing the extramembraneous catalytic core and F(0) containing the membrane proton channel, linked together by a central stalk and a peripheral stalk. During catalysis, ATP synthesis in the catalytic domain of F(1) is coupled via a rotary mechanism of the central stalk subunits to proton translocation. Component of the F(0) channel, it forms part of the peripheral stalk, linking F(1) to F(0). This chain is ATP synthase subunit b, found in Idiomarina loihiensis (strain ATCC BAA-735 / DSM 15497 / L2-TR).